Consider the following 346-residue polypeptide: MARKSNLPVLLVPFLLCQALVRCSSPLPLVVNTWPFKNATEAAWRALASGGSALDAVESGCAMCEREQCDGSVGFGGSPDELGETTLDAMIMDGTTMDVGAVGDLRRIKNAIGVARKVLEHTTHTLLVGESATTFAQSMGFINEDLSTTASQALHSDWLARNCQPNYWRNVIPDPSKYCGPYKPPGILKQDIPIHKETEDDRGHDTIGMVVIHKTGHIAAGTSTNGIKFKIHGRVGDSPIPGAGAYADDTAGAAAATGNGDILMRFLPSYQAVEYMRRGEDPTIACQKVISRIQKHFPEFFGAVICANVTGSYGAACNKLSTFTQFSFMVYNSEKNQPTEEKVDCI.

The signal sequence occupies residues 1–23; sequence MARKSNLPVLLVPFLLCQALVRC. At Ser24 the chain carries Blocked amino end (Ser). An N-linked (GlcNAc...) asparagine glycan is attached at Asn38. 2 cysteine pairs are disulfide-bonded: Cys64/Cys69 and Cys163/Cys179. Thr206 serves as the catalytic Nucleophile. Substrate contacts are provided by residues 234–237 and 257–260; these read RVGD and TGNG. Cys286 and Cys306 are oxidised to a cystine. The N-linked (GlcNAc...) asparagine glycan is linked to Asn308. A disulfide bond links Cys317 and Cys345.

This sequence belongs to the Ntn-hydrolase family. Heterotetramer of two alpha and two beta chains arranged as a dimer of alpha/beta heterodimers. Post-translationally, cleaved into an alpha and beta chain by autocatalysis; this activates the enzyme. The N-terminal residue of the beta subunit is responsible for the nucleophile hydrolase activity. In terms of processing, N-glycosylated.

The protein localises to the lysosome. The enzyme catalyses N(4)-(beta-N-acetyl-D-glucosaminyl)-L-asparagine + H2O = N-acetyl-beta-D-glucosaminylamine + L-aspartate + H(+). Its function is as follows. Cleaves the GlcNAc-Asn bond which joins oligosaccharides to the peptide of asparagine-linked glycoproteins. The chain is N(4)-(beta-N-acetylglucosaminyl)-L-asparaginase (AGA) from Homo sapiens (Human).